Here is a 387-residue protein sequence, read N- to C-terminus: Growth-regulating factor 3 (387 aa).

Positions proline 53 to arginine 88 constitute a QLQ domain. 2 short sequence motifs (bipartite nuclear localization signal) span residues lysine 111 to arginine 129 and arginine 147 to lysine 154. A WRC domain is found at aspartate 114–alanine 158. The interval methionine 145–valine 176 is disordered.

This sequence belongs to the GRF family.

It is found in the nucleus. In terms of biological role, transcription activator that plays a regulatory role in gibberellin-induced stem elongation. This is Growth-regulating factor 3 (GRF3) from Oryza sativa subsp. japonica (Rice).